We begin with the raw amino-acid sequence, 321 residues long: Peroxidase 4 (321 aa).

Positions 1-25 (MASSSFSIVVVALGVLALFAGSSSA) are cleaved as a signal peptide. Residue Gln-26 is modified to Pyrrolidone carboxylic acid. 4 disulfide bridges follow: Cys-36–Cys-116, Cys-69–Cys-74, Cys-122–Cys-317, and Cys-201–Cys-226. His-67 (proton acceptor) is an active-site residue. Ca(2+) is bound by residues Asp-68, Val-71, Gly-73, Asp-75, and Ser-77. Residue Pro-164 participates in substrate binding. His-194 contributes to the heme b binding site. Thr-195 contributes to the Ca(2+) binding site. N-linked (GlcNAc...) asparagine glycosylation is present at Asn-210. The Ca(2+) site is built by Asp-241, Thr-244, and Asp-249.

The protein belongs to the peroxidase family. Classical plant (class III) peroxidase subfamily. The cofactor is heme b. Ca(2+) serves as cofactor.

It localises to the secreted. It carries out the reaction 2 a phenolic donor + H2O2 = 2 a phenolic radical donor + 2 H2O. Its function is as follows. Removal of H(2)O(2), oxidation of toxic reductants, biosynthesis and degradation of lignin, suberization, auxin catabolism, response to environmental stresses such as wounding, pathogen attack and oxidative stress. These functions might be dependent on each isozyme/isoform in each plant tissue. This Vitis vinifera (Grape) protein is Peroxidase 4.